An 874-amino-acid chain; its full sequence is MYQTTAALRSAFLEYFRTNGHQVVDSSSLVPANDPTLLFTNAGMNQFKDVFLGADKRSYSRATSSQRCVRAGGKHNDLDNVGYTARHHTFFEMLGNFSFGDYFKEEAIHFAWTFLTEELKLPKERLCVTIYETDDEAFEIWNKKIGVAAENIIRIGDNKGAAYASDNFWQMGDTGPCGPCSEIFYDHGDHIWGGRPGTPEEDGDRFIEIWNIVFMQYNRQADGEMKPLPKPSVDTGMGIERIAAIMQGVHSNYEIDIFQALIKKTAAILGVTDLENKSLRVIADHIRSCAFLIADGVMPSNEGRGYVLRRIIRRAVRHGNKLGATESFFYKLVPTLIEVMGDAAKGLQETQAIVEKSLKAEEEQFARTLERGLGILDAALNELTTKVLDGETAFKLYDTYGFPVDLTADVCREREITVDEAGFEAAMAEQRKRAQAAGQFDTDYNEGLKIDEQSSFTGYTELNNQATVTAIFKSGEAAETITAGDEAVIVLDNTPFYGESGGQSGDKGVLIADGIEFTVIDTQKYGQAIGHIGRVVTGEIKAGQSLTANVDKKLRHRTELNHSVTHLLHAALRQVLGAHVSQKGSLVDPERLRFDFSHFEGVKANELKEVEELVNTQIRRNHELTAEVMDIETAKEKGAMALFGEKYDSEVRVVTMGDFSIELCGGTHVGRTGDIGLFKITSEGGIAAGIRRIEAVTGAAAMAYVAKQQAQLEEAATLLKGDSASVVAKLKAQLDKTKQLEKELSQLKDKLAAATSADLAGEAVEVNGVKVLVKKLEGVDAGALRGLQDELKQKLQSGIVVLAIAGEDKVNLIVGVTKDLTGKVKAGELVASIAVQVGGKGGGRPDMAQAGGSQPENLDGALEQVIPWITAKLS.

The Zn(2+) site is built by H562, H566, C664, and H668.

Belongs to the class-II aminoacyl-tRNA synthetase family. Zn(2+) is required as a cofactor.

It localises to the cytoplasm. The catalysed reaction is tRNA(Ala) + L-alanine + ATP = L-alanyl-tRNA(Ala) + AMP + diphosphate. Its function is as follows. Catalyzes the attachment of alanine to tRNA(Ala) in a two-step reaction: alanine is first activated by ATP to form Ala-AMP and then transferred to the acceptor end of tRNA(Ala). Also edits incorrectly charged Ser-tRNA(Ala) and Gly-tRNA(Ala) via its editing domain. The polypeptide is Alanine--tRNA ligase (Shewanella halifaxensis (strain HAW-EB4)).